The chain runs to 179 residues: Large ribosomal subunit protein uL5 (179 aa).

Belongs to the universal ribosomal protein uL5 family. Part of the 50S ribosomal subunit; part of the 5S rRNA/L5/L18/L25 subcomplex. Contacts the 5S rRNA and the P site tRNA. Forms a bridge to the 30S subunit in the 70S ribosome.

In terms of biological role, this is one of the proteins that bind and probably mediate the attachment of the 5S RNA into the large ribosomal subunit, where it forms part of the central protuberance. In the 70S ribosome it contacts protein S13 of the 30S subunit (bridge B1b), connecting the 2 subunits; this bridge is implicated in subunit movement. Contacts the P site tRNA; the 5S rRNA and some of its associated proteins might help stabilize positioning of ribosome-bound tRNAs. The protein is Large ribosomal subunit protein uL5 of Cellvibrio japonicus (strain Ueda107) (Pseudomonas fluorescens subsp. cellulosa).